Consider the following 697-residue polypeptide: Testis-specific gene 10 protein (697 aa).

The interval 556–688 (QMTNERISMQ…SPDRGLDRSL (133 aa)) is interaction with HIF1A. Positions 656-684 (NAYNLGPMKPNTKCHSPERAHHRSPDRGL) are disordered. A compositionally biased stretch (basic and acidic residues) spans 670–684 (HSPERAHHRSPDRGL). Serine 687 is subject to Phosphoserine.

This sequence belongs to the CEP135/TSGA10 family. Interacts with HIF1A. Post-translationally, processed into N-terminal 27-kDa and C-terminal 55-kDa fragments. Predominantly expressed in testis, in spermatozoa (at protein level). Not detected in Leydig cells. The N-terminal 27-kDa fragment is also detected in liver, while the C-terminal 55-kDa fragment is also found retina, brain and kidney (at protein level).

It is found in the cytoplasm. The protein resides in the cytoskeleton. The protein localises to the microtubule organizing center. Its subcellular location is the centrosome. It localises to the centriole. Plays a role in spermatogenesis. When overexpressed, prevents nuclear localization of HIF1A. In Mus musculus (Mouse), this protein is Testis-specific gene 10 protein (Tsga10).